A 152-amino-acid chain; its full sequence is Small ribosomal subunit protein uS11A (152 aa).

The tract at residues 131–152 is disordered; that stretch reads EDVTPIPSDSTRRKGGRRGRRL. Residues 143–152 are compositionally biased toward basic residues; the sequence is RKGGRRGRRL.

Belongs to the universal ribosomal protein uS11 family.

This chain is Small ribosomal subunit protein uS11A, found in Anopheles gambiae (African malaria mosquito).